Consider the following 176-residue polypeptide: NAD(P)H-quinone oxidoreductase subunit 6, chloroplastic (176 aa).

A run of 5 helical transmembrane segments spans residues 10–30 (ILML…VLLT), 33–53 (IYSA…YFLL), 60–80 (VAQL…AVMF), 95–115 (IGDG…MTTI), and 152–172 (FYLP…GAIT).

It belongs to the complex I subunit 6 family. As to quaternary structure, NDH is composed of at least 16 different subunits, 5 of which are encoded in the nucleus.

Its subcellular location is the plastid. The protein resides in the chloroplast thylakoid membrane. The catalysed reaction is a plastoquinone + NADH + (n+1) H(+)(in) = a plastoquinol + NAD(+) + n H(+)(out). It carries out the reaction a plastoquinone + NADPH + (n+1) H(+)(in) = a plastoquinol + NADP(+) + n H(+)(out). NDH shuttles electrons from NAD(P)H:plastoquinone, via FMN and iron-sulfur (Fe-S) centers, to quinones in the photosynthetic chain and possibly in a chloroplast respiratory chain. The immediate electron acceptor for the enzyme in this species is believed to be plastoquinone. Couples the redox reaction to proton translocation, and thus conserves the redox energy in a proton gradient. In Triticum aestivum (Wheat), this protein is NAD(P)H-quinone oxidoreductase subunit 6, chloroplastic (ndhG).